The sequence spans 609 residues: Laccase-1 (609 aa).

The first 20 residues, 1 to 20 (MYLSTVLFPLLALNLGLSHA), serve as a signal peptide directing secretion. The Plastocyanin-like 1 domain occupies 45–141 (VFTNGEYPGP…DGQVGAMYIR (97 aa)). Asn-75 carries N-linked (GlcNAc...) asparagine glycosylation. Cu cation is bound by residues His-79, His-81, His-123, and His-125. Asn-257 carries N-linked (GlcNAc...) asparagine glycosylation. One can recognise a Plastocyanin-like 2 domain in the interval 270–372 (TPSSVEPPVI…MSVYAILSYV (103 aa)). 3 N-linked (GlcNAc...) asparagine glycosylation sites follow: Asn-403, Asn-443, and Asn-486. The 140-residue stretch at 463 to 602 (STPLLFEPDP…MGGMALALLD (140 aa)) folds into the Plastocyanin-like 3 domain. Cu cation is bound by residues His-508, His-511, and His-513. N-linked (GlcNAc...) asparagine glycans are attached at residues Asn-531 and Asn-546. Residues His-585, Cys-586, His-587, and His-591 each coordinate Cu cation.

This sequence belongs to the multicopper oxidase family. Cu cation serves as cofactor.

Its subcellular location is the secreted. The enzyme catalyses 4 hydroquinone + O2 = 4 benzosemiquinone + 2 H2O. Its function is as follows. Required for the conversion of the yellow polyketide pigment synthesized by wA to the conidial green pigment. This is Laccase-1 (yA) from Emericella nidulans (strain FGSC A4 / ATCC 38163 / CBS 112.46 / NRRL 194 / M139) (Aspergillus nidulans).